Consider the following 452-residue polypeptide: Cobyrinate a,c-diamide synthase (452 aa).

A GATase cobBQ-type domain is found at 246-439 (TLAYALDDAF…LHVHFYQDEQ (194 aa)). Cysteine 328 functions as the Nucleophile in the catalytic mechanism.

It belongs to the CobB/CbiA family. Mg(2+) serves as cofactor.

It carries out the reaction cob(II)yrinate + 2 L-glutamine + 2 ATP + 2 H2O = cob(II)yrinate a,c diamide + 2 L-glutamate + 2 ADP + 2 phosphate + 2 H(+). It participates in cofactor biosynthesis; adenosylcobalamin biosynthesis; cob(II)yrinate a,c-diamide from sirohydrochlorin (anaerobic route): step 10/10. Catalyzes the ATP-dependent amidation of the two carboxylate groups at positions a and c of cobyrinate, using either L-glutamine or ammonia as the nitrogen source. The protein is Cobyrinate a,c-diamide synthase of Streptococcus sanguinis (strain SK36).